Reading from the N-terminus, the 345-residue chain is N-acetyl-gamma-glutamyl-phosphate reductase (345 aa).

Residue Cys149 is part of the active site.

The protein belongs to the NAGSA dehydrogenase family. Type 1 subfamily.

The protein resides in the cytoplasm. The catalysed reaction is N-acetyl-L-glutamate 5-semialdehyde + phosphate + NADP(+) = N-acetyl-L-glutamyl 5-phosphate + NADPH + H(+). It functions in the pathway amino-acid biosynthesis; L-arginine biosynthesis; N(2)-acetyl-L-ornithine from L-glutamate: step 3/4. Its function is as follows. Catalyzes the NADPH-dependent reduction of N-acetyl-5-glutamyl phosphate to yield N-acetyl-L-glutamate 5-semialdehyde. This is N-acetyl-gamma-glutamyl-phosphate reductase from Bacillus cytotoxicus (strain DSM 22905 / CIP 110041 / 391-98 / NVH 391-98).